We begin with the raw amino-acid sequence, 189 residues long: GTPase NRas (189 aa).

GTP contacts are provided by residues 10-18 (GAGGVGKSA) and 29-30 (VD). An Effector region motif is present at residues 32-40 (YDPTIEDSY). Residue 57–61 (DTAGQ) coordinates GTP. Residue Ser-89 is modified to Phosphoserine. Residue 116–119 (NKCD) coordinates GTP. Residues 166–185 (YRMKKLNSNDDGTQGCMGLP) are hypervariable region. A Glycyl lysine isopeptide (Lys-Gly) (interchain with G-Cter in ubiquitin) cross-link involves residue Lys-170. Cys-181 is lipidated: S-palmitoyl cysteine. A lipid anchor (S-farnesyl cysteine) is attached at Cys-186. The propeptide at 187 to 189 (VVM) is removed in mature form.

It belongs to the small GTPase superfamily. Ras family. In terms of assembly, interacts (active GTP-bound form preferentially) with RGS14. Interacts (active GTP-bound form) with RASSF7. Interacts (active GTP-bound form) with both SHOC2 and PP1c (all isoforms) to form a tertiary complex; SHOC2 and PP1c preferably bind M-Ras/MRAS, but they also bind K-Ras/KRAS, N-Ras/NRAS and H-Ras/HRAS. Post-translationally, palmitoylated by the ZDHHC9-GOLGA7 complex. Depalmitoylated by ABHD17A, ABHD17B and ABHD17C. A continuous cycle of de- and re-palmitoylation regulates rapid exchange between plasma membrane and Golgi. In terms of processing, acetylation at Lys-104 prevents interaction with guanine nucleotide exchange factors (GEFs). Ubiquitinated by the BCR(LZTR1) E3 ubiquitin ligase complex at Lys-170 in a non-degradative manner, leading to inhibit Ras signaling by decreasing Ras association with membranes. Post-translationally, phosphorylation at Ser-89 enhances NRAS association with its downstream effectors.

It is found in the cell membrane. The protein resides in the golgi apparatus membrane. It carries out the reaction GTP + H2O = GDP + phosphate + H(+). Alternates between an inactive form bound to GDP and an active form bound to GTP. Activated by a guanine nucleotide-exchange factor (GEF) and inactivated by a GTPase-activating protein (GAP). Its function is as follows. Ras proteins bind GDP/GTP and possess intrinsic GTPase activity. This Cavia porcellus (Guinea pig) protein is GTPase NRas (NRAS).